The chain runs to 480 residues: UDP-N-acetylmuramoylalanine--D-glutamate ligase (480 aa).

110–116 (GTNGKST) contributes to the ATP binding site.

Belongs to the MurCDEF family.

The protein resides in the cytoplasm. The catalysed reaction is UDP-N-acetyl-alpha-D-muramoyl-L-alanine + D-glutamate + ATP = UDP-N-acetyl-alpha-D-muramoyl-L-alanyl-D-glutamate + ADP + phosphate + H(+). It functions in the pathway cell wall biogenesis; peptidoglycan biosynthesis. In terms of biological role, cell wall formation. Catalyzes the addition of glutamate to the nucleotide precursor UDP-N-acetylmuramoyl-L-alanine (UMA). The polypeptide is UDP-N-acetylmuramoylalanine--D-glutamate ligase (Synechococcus sp. (strain JA-2-3B'a(2-13)) (Cyanobacteria bacterium Yellowstone B-Prime)).